A 114-amino-acid polypeptide reads, in one-letter code: Large ribosomal subunit protein bL19 (114 aa).

The protein belongs to the bacterial ribosomal protein bL19 family.

In terms of biological role, this protein is located at the 30S-50S ribosomal subunit interface and may play a role in the structure and function of the aminoacyl-tRNA binding site. The chain is Large ribosomal subunit protein bL19 (rplS) from Listeria innocua serovar 6a (strain ATCC BAA-680 / CLIP 11262).